The chain runs to 265 residues: Aquaporin-5 (265 aa).

Residues 1-12 lie on the Cytoplasmic side of the membrane; the sequence is MKKEVCSVAFFK. The helical transmembrane segment at 13 to 33 threads the bilayer; sequence AVFAEFLATLIFVFFGLGSAL. Over 34-39 the chain is Extracellular; that stretch reads KWPSAL. A helical membrane pass occupies residues 40 to 60; sequence PTILQISIAFGLAIGTLAQAL. The Cytoplasmic portion of the chain corresponds to 61 to 65; it reads GPVSG. Residues 66 to 74 constitute an intramembrane region (discontinuously helical); that stretch reads GHINPAITL. The short motif at 69–71 is the NPA 1 element; the sequence is NPA. The Cytoplasmic portion of the chain corresponds to 75–87; that stretch reads ALLIGNQISLLRA. A helical transmembrane segment spans residues 88–108; that stretch reads IFYVAAQLVGAIAGAGILYWL. Topologically, residues 109–126 are extracellular; that stretch reads APGNARGNLAVNALSNNT. An N-linked (GlcNAc...) asparagine glycan is attached at Asn124. The helical transmembrane segment at 127–147 threads the bilayer; the sequence is TPGKAVVVELILTFQLALCIF. Residues 148 to 158 are Cytoplasmic-facing; the sequence is SSTDSRRTSPV. The chain crosses the membrane as a helical span at residues 159–179; that stretch reads GSPALSIGLSVTLGHLVGIYF. A topological domain (extracellular) is located at residue Thr180. Residues 181-191 constitute an intramembrane region (discontinuously helical); the sequence is GCSMNPARSFG. The NPA 2 motif lies at 185–187; sequence NPA. Topologically, residues 192–203 are extracellular; the sequence is PAVVMNRFSPSH. Residues 204 to 224 traverse the membrane as a helical segment; the sequence is WVFWVGPIVGAVLAAILYFYL. The Cytoplasmic portion of the chain corresponds to 225–265; the sequence is LFPSSLSLHDRVAVVKGTYEPEEDWEDHREERKKTIELTAH.

This sequence belongs to the MIP/aquaporin (TC 1.A.8) family. Homotetramer; each monomer provides an independent water pore. Interacts with TRPV4; the interaction is probably indirect and regulates TRPV4 activation by hypotonicity. In terms of tissue distribution, detected at the luminal membrane of secretory epithelial cells in hindpaw sweat glands. Detected in acinar cells in salivary glands, in duct cells in lacrimal glands and in lung (at protein level). Detected in lung, parotid, submandibular, sublingual, and lacrimal gland tissues.

Its subcellular location is the apical cell membrane. The protein localises to the cell membrane. It is found in the cytoplasmic vesicle membrane. The enzyme catalyses H2O(in) = H2O(out). In terms of biological role, aquaporins form homotetrameric transmembrane channels, with each monomer independently mediating water transport across the plasma membrane along its osmotic gradient. Plays an important role in fluid secretion in salivary glands. Required for TRPV4 activation by hypotonicity. Together with TRPV4, controls regulatory volume decrease in salivary epithelial cells. Seems to play a redundant role in water transport in the eye, lung and in sweat glands. The protein is Aquaporin-5 of Mus musculus (Mouse).